The primary structure comprises 299 residues: Protoheme IX farnesyltransferase 1 (299 aa).

The next 9 membrane-spanning stretches (helical) occupy residues 25–45 (VVVL…RAGV), 47–67 (WSVL…AAVV), 95–115 (LPAL…LLAF), 119–139 (LTAW…TGFL), 147–167 (IVIG…AVSG), 173–193 (PLLL…ALAI), 217–237 (ALHI…PYAI), 243–263 (LYLA…WVLY), and 279–299 (IGYL…LLNL).

The protein belongs to the UbiA prenyltransferase family. Protoheme IX farnesyltransferase subfamily.

The protein resides in the cell inner membrane. The enzyme catalyses heme b + (2E,6E)-farnesyl diphosphate + H2O = Fe(II)-heme o + diphosphate. It participates in porphyrin-containing compound metabolism; heme O biosynthesis; heme O from protoheme: step 1/1. Its function is as follows. Converts heme B (protoheme IX) to heme O by substitution of the vinyl group on carbon 2 of heme B porphyrin ring with a hydroxyethyl farnesyl side group. This chain is Protoheme IX farnesyltransferase 1, found in Pseudomonas entomophila (strain L48).